A 324-amino-acid polypeptide reads, in one-letter code: tRNA pseudouridine synthase B (324 aa).

Catalysis depends on Asp49, which acts as the Nucleophile. A disordered region spans residues 87–107; the sequence is RSTDDLEGQPTKTSDKRPSRE.

The protein belongs to the pseudouridine synthase TruB family. Type 1 subfamily.

It carries out the reaction uridine(55) in tRNA = pseudouridine(55) in tRNA. Functionally, responsible for synthesis of pseudouridine from uracil-55 in the psi GC loop of transfer RNAs. The chain is tRNA pseudouridine synthase B from Brucella melitensis biotype 1 (strain ATCC 23456 / CCUG 17765 / NCTC 10094 / 16M).